A 217-amino-acid chain; its full sequence is Peptide methionine sulfoxide reductase MsrA (217 aa).

The segment at 16 to 39 is disordered; the sequence is EALKGGRHPVLESPQPHTVLGTPI. Residue Cys56 is part of the active site.

Belongs to the MsrA Met sulfoxide reductase family.

The catalysed reaction is L-methionyl-[protein] + [thioredoxin]-disulfide + H2O = L-methionyl-(S)-S-oxide-[protein] + [thioredoxin]-dithiol. It catalyses the reaction [thioredoxin]-disulfide + L-methionine + H2O = L-methionine (S)-S-oxide + [thioredoxin]-dithiol. Its function is as follows. Has an important function as a repair enzyme for proteins that have been inactivated by oxidation. Catalyzes the reversible oxidation-reduction of methionine sulfoxide in proteins to methionine. The chain is Peptide methionine sulfoxide reductase MsrA from Corynebacterium efficiens (strain DSM 44549 / YS-314 / AJ 12310 / JCM 11189 / NBRC 100395).